A 562-amino-acid polypeptide reads, in one-letter code: Endoglucanase E1 (562 aa).

An N-terminal signal peptide occupies residues 1 to 41 (MPRALRRVPGSRVMLRVGVVVAVLALVAALANLAVPRPARA). Residues 42–400 (AGGGYWHTSG…IKSSIFDPVG (359 aa)) are catalytic. A disulfide bond links C75 and C161. E203 serves as the catalytic Proton donor. A disulfide bridge links C209 with C212. Residue E323 is the Nucleophile of the active site. Residues 399–462 (VGASASPSSQ…PTPSPTAASG (64 aa)) form a disordered region. Low complexity-rich tracts occupy residues 401-411 (ASASPSSQPSP) and 437-449 (PTPTLTPTATPTP). Positions 458-562 (TAASGARCTA…AAPTVACAAS (105 aa)) constitute a CBM2 domain.

Belongs to the glycosyl hydrolase 5 (cellulase A) family.

It carries out the reaction Endohydrolysis of (1-&gt;4)-beta-D-glucosidic linkages in cellulose, lichenin and cereal beta-D-glucans.. Functionally, has a very high specific activity on carboxymethylcellulose. This chain is Endoglucanase E1, found in Acidothermus cellulolyticus (strain ATCC 43068 / DSM 8971 / 11B).